A 274-amino-acid polypeptide reads, in one-letter code: Large ribosomal subunit protein uL2cz/uL2cy (274 aa).

Disordered regions lie at residues 1–20 (MAIH…AVDS) and 223–274 (MNPV…RRSK).

The protein belongs to the universal ribosomal protein uL2 family. Part of the 50S ribosomal subunit.

The protein localises to the plastid. Its subcellular location is the chloroplast. The chain is Large ribosomal subunit protein uL2cz/uL2cy (rpl2-A) from Eucalyptus globulus subsp. globulus (Tasmanian blue gum).